The primary structure comprises 199 residues: TATA-box-binding protein (199 aa).

Tandem repeats lie at residues 10–86 (IENI…VKLL) and 101–177 (VQNI…YNQL).

This sequence belongs to the TBP family.

Its function is as follows. General factor that plays a role in the activation of archaeal genes transcribed by RNA polymerase. Binds specifically to the TATA box promoter element which lies close to the position of transcription initiation. This Pyrobaculum islandicum (strain DSM 4184 / JCM 9189 / GEO3) protein is TATA-box-binding protein.